Consider the following 213-residue polypeptide: GTP cyclohydrolase 1 (213 aa).

Residues C104, H107, and C175 each contribute to the Zn(2+) site.

The protein belongs to the GTP cyclohydrolase I family. In terms of assembly, toroid-shaped homodecamer, composed of two pentamers of five dimers.

It catalyses the reaction GTP + H2O = 7,8-dihydroneopterin 3'-triphosphate + formate + H(+). It participates in cofactor biosynthesis; 7,8-dihydroneopterin triphosphate biosynthesis; 7,8-dihydroneopterin triphosphate from GTP: step 1/1. In Brucella anthropi (strain ATCC 49188 / DSM 6882 / CCUG 24695 / JCM 21032 / LMG 3331 / NBRC 15819 / NCTC 12168 / Alc 37) (Ochrobactrum anthropi), this protein is GTP cyclohydrolase 1.